The primary structure comprises 350 residues: Ribosomal RNA large subunit methyltransferase M (350 aa).

S-adenosyl-L-methionine-binding positions include alanine 217–glycine 220, aspartate 236, aspartate 256, and aspartate 272. The Proton acceptor role is filled by lysine 301.

Belongs to the class I-like SAM-binding methyltransferase superfamily. RNA methyltransferase RlmE family. RlmM subfamily. In terms of assembly, monomer.

The protein localises to the cytoplasm. It catalyses the reaction cytidine(2498) in 23S rRNA + S-adenosyl-L-methionine = 2'-O-methylcytidine(2498) in 23S rRNA + S-adenosyl-L-homocysteine + H(+). Its function is as follows. Catalyzes the 2'-O-methylation at nucleotide C2498 in 23S rRNA. The chain is Ribosomal RNA large subunit methyltransferase M from Cellvibrio japonicus (strain Ueda107) (Pseudomonas fluorescens subsp. cellulosa).